Reading from the N-terminus, the 107-residue chain is CLAVATA3/ESR (CLE)-related protein 10 (107 aa).

Residues 1–23 (MKTNRNRPINILIVFFLLTTARA) form the signal peptide. N-linked (GlcNAc...) asparagine glycans are attached at residues asparagine 27 and asparagine 30. The disordered stretch occupies residues 73-107 (SRQPLFSPPPPPTEIDQRYGVEKRLVPSGPNPLHN). The span at 87–97 (IDQRYGVEKRL) shows a compositional bias: basic and acidic residues. Hydroxyproline is present on residues proline 99 and proline 102. O-linked (Ara...) hydroxyproline glycosylation is present at proline 102.

Belongs to the CLV3/ESR signal peptide family. The O-glycosylation (arabinosylation) of the hydroxyproline Pro-102 enhances binding affinity of the CLE10p peptide for its receptor. In terms of tissue distribution, expressed in stems, apex, leaves, flowers, siliques and pollen.

The protein resides in the secreted. It is found in the extracellular space. Functionally, extracellular signal peptide that regulates cell fate. Represses root apical meristem maintenance. Regulates the transition of protophloem cells from proliferation to differentiation, thus impinging on postembryonic growth capacity of the root meristem; this signaling pathway requires CRN and CLV2. This chain is CLAVATA3/ESR (CLE)-related protein 10, found in Arabidopsis thaliana (Mouse-ear cress).